Reading from the N-terminus, the 193-residue chain is Peptidyl-tRNA hydrolase (193 aa).

Tyr18 is a binding site for tRNA. Catalysis depends on His23, which acts as the Proton acceptor. TRNA contacts are provided by Phe69, Asn71, and Asn117.

The protein belongs to the PTH family. In terms of assembly, monomer.

The protein resides in the cytoplasm. It carries out the reaction an N-acyl-L-alpha-aminoacyl-tRNA + H2O = an N-acyl-L-amino acid + a tRNA + H(+). Functionally, hydrolyzes ribosome-free peptidyl-tRNAs (with 1 or more amino acids incorporated), which drop off the ribosome during protein synthesis, or as a result of ribosome stalling. Its function is as follows. Catalyzes the release of premature peptidyl moieties from peptidyl-tRNA molecules trapped in stalled 50S ribosomal subunits, and thus maintains levels of free tRNAs and 50S ribosomes. The polypeptide is Peptidyl-tRNA hydrolase (Teredinibacter turnerae (strain ATCC 39867 / T7901)).